Consider the following 473-residue polypeptide: Ornithine aminotransferase, mitochondrial (473 aa).

A mitochondrion-targeting transit peptide spans 1 to 32 (MAAALARRGGGGLARALARGRGMCSATAAERA). Residue K293 is modified to N6-(pyridoxal phosphate)lysine.

It belongs to the class-III pyridoxal-phosphate-dependent aminotransferase family. Homotetramer. Pyridoxal 5'-phosphate serves as cofactor.

Its subcellular location is the mitochondrion matrix. It carries out the reaction a 2-oxocarboxylate + L-ornithine = L-glutamate 5-semialdehyde + an L-alpha-amino acid. The protein operates within amino-acid biosynthesis; L-proline biosynthesis; L-glutamate 5-semialdehyde from L-ornithine: step 1/1. Confers drought and oxidative stress tolerance mainly through enhancing ROS-scavenging capacity and Pro pre-accumulation. The sequence is that of Ornithine aminotransferase, mitochondrial (OAT) from Oryza sativa subsp. japonica (Rice).